Reading from the N-terminus, the 245-residue chain is 1-(5-phosphoribosyl)-5-[(5-phosphoribosylamino)methylideneamino] imidazole-4-carboxamide isomerase (245 aa).

Asp7 (proton acceptor) is an active-site residue. The Proton donor role is filled by Asp129.

Belongs to the HisA/HisF family.

It localises to the cytoplasm. It carries out the reaction 1-(5-phospho-beta-D-ribosyl)-5-[(5-phospho-beta-D-ribosylamino)methylideneamino]imidazole-4-carboxamide = 5-[(5-phospho-1-deoxy-D-ribulos-1-ylimino)methylamino]-1-(5-phospho-beta-D-ribosyl)imidazole-4-carboxamide. The protein operates within amino-acid biosynthesis; L-histidine biosynthesis; L-histidine from 5-phospho-alpha-D-ribose 1-diphosphate: step 4/9. The sequence is that of 1-(5-phosphoribosyl)-5-[(5-phosphoribosylamino)methylideneamino] imidazole-4-carboxamide isomerase from Citrobacter koseri (strain ATCC BAA-895 / CDC 4225-83 / SGSC4696).